Consider the following 382-residue polypeptide: Succinyl-diaminopimelate desuccinylase (382 aa).

His-73 lines the Zn(2+) pocket. Asp-75 is a catalytic residue. Asp-106 serves as a coordination point for Zn(2+). Glu-140 serves as the catalytic Proton acceptor. 3 residues coordinate Zn(2+): Glu-141, Glu-169, and His-355.

Belongs to the peptidase M20A family. DapE subfamily. Homodimer. The cofactor is Zn(2+). Requires Co(2+) as cofactor.

It carries out the reaction N-succinyl-(2S,6S)-2,6-diaminopimelate + H2O = (2S,6S)-2,6-diaminopimelate + succinate. It participates in amino-acid biosynthesis; L-lysine biosynthesis via DAP pathway; LL-2,6-diaminopimelate from (S)-tetrahydrodipicolinate (succinylase route): step 3/3. Functionally, catalyzes the hydrolysis of N-succinyl-L,L-diaminopimelic acid (SDAP), forming succinate and LL-2,6-diaminopimelate (DAP), an intermediate involved in the bacterial biosynthesis of lysine and meso-diaminopimelic acid, an essential component of bacterial cell walls. This is Succinyl-diaminopimelate desuccinylase from Saccharophagus degradans (strain 2-40 / ATCC 43961 / DSM 17024).